The sequence spans 177 residues: Large ribosomal subunit protein uL6 (177 aa).

It belongs to the universal ribosomal protein uL6 family. Part of the 50S ribosomal subunit.

Functionally, this protein binds to the 23S rRNA, and is important in its secondary structure. It is located near the subunit interface in the base of the L7/L12 stalk, and near the tRNA binding site of the peptidyltransferase center. The chain is Large ribosomal subunit protein uL6 from Pseudomonas fluorescens (strain Pf0-1).